The sequence spans 449 residues: Adenylosuccinate synthetase (449 aa).

GTP-binding positions include 37-43 and 65-67; these read GDEGKGK and GHT. Asp-38 serves as the catalytic Proton acceptor. The Mg(2+) site is built by Asp-38 and Gly-65. Residues 38-41, 63-66, Thr-155, Arg-169, Asn-247, Thr-262, and Arg-326 each bind IMP; these read DEGK and NAGH. His-66 (proton donor) is an active-site residue. A substrate-binding site is contributed by 322 to 328; that stretch reads VTTKRKR. GTP-binding positions include Arg-328, 354–356, and 437–439; these read KLD and GVG.

It belongs to the adenylosuccinate synthetase family. Homodimer. The cofactor is Mg(2+).

It is found in the cytoplasm. The catalysed reaction is IMP + L-aspartate + GTP = N(6)-(1,2-dicarboxyethyl)-AMP + GDP + phosphate + 2 H(+). It participates in purine metabolism; AMP biosynthesis via de novo pathway; AMP from IMP: step 1/2. Its function is as follows. Plays an important role in the de novo pathway and in the salvage pathway of purine nucleotide biosynthesis. Catalyzes the first committed step in the biosynthesis of AMP from IMP. The protein is Adenylosuccinate synthetase of Drosophila willistoni (Fruit fly).